Reading from the N-terminus, the 172-residue chain is MRTLVMVACAVSLAACSSPPKPPTVSGRHRIPINSPAAQEELRLQVFPQEPTAQATMWPARPPKQTVNVYFPQDVTVFRPTSAQINQLHTLLWPVPKHINVRGLTDNSCPPPGDTQVARVRALAIYNWLINQGVPASRITISYAPVKDYASNAPLSPGRVLNRRVDIEILRK.

A signal peptide spans 1–15; the sequence is MRTLVMVACAVSLAA. Residue Cys16 is the site of N-palmitoyl cysteine attachment. Residue Cys16 is the site of S-diacylglycerol cysteine attachment. Residues 58–172 form the OmpA-like domain; that stretch reads WPARPPKQTV…RRVDIEILRK (115 aa).

The protein localises to the cell outer membrane. The sequence is that of Type IV secretion system putative outer membrane lipoprotein BMEII0036 from Brucella melitensis biotype 1 (strain ATCC 23456 / CCUG 17765 / NCTC 10094 / 16M).